A 1024-amino-acid chain; its full sequence is MAKIRVYELAKKLNMTNKALLTKLKAMNIEAKSHMSSLEDDTEARVRESLHGMKNKQADTRVKSSVIRRRRPPKPEPSVTELPDDEAAGSNGAAEEKITTPGPVTGDEMTETSTPAPVKSKIPLKAQTDSTNRPTPEDPVVKATELKPKKVTKPKSSPARVILRPDTPAKEEPTKAKEVPAAKEVPAAKEAPKVKETSKAVNVSEDEVNPLPTKNVELNSGDSKPDGALEEKSETDEKALEKEPTIKQEDTILEDNHARKEVRSVAVDDDDKNLDTAEAKDKKRKKKKVQKRSEPAKIIKMAVPISVRSRNKVKTEATQAPTSPQRPKVHPKPADKGPARAQAHRPDTGRDAVVLPGEGDGEVKRSKKKEWKKKGVGGPGVEFAPKGAPRKRKSVVEGKDLYEKGRSGKKGRRKDGRVKKTKTMKTQITVPKAIKRRIKIDEVIELSELAKRMGIKANEMIVKLMGMGVMATVNQTIDFDTACLVAAEFDYEVEKASVEEDIVLQVQEAEIDPDKLVSRPPVVTIMGHVDHGKTSLLDVIRKSKVATGEAGGITQHIGAYRVKTKKGTITFLDTPGHAAFTSMRSRGAQVTDLVVLVVAADDGVMPQTIEAINHSKAANVPVVVAVNKMDKPGADPDKVMRELSEHGLLAEDWGGDVIFAKVSAKTGKGIDGLLEMILLQSEVLELKANPDSPATGHVVEARLDAGRGPVATILVNQGTLKAGQPVVCGLYSGKIRVMIDDMGDDVEFAGPSTPVEIVGLSGVPEAGDEFVALDSEKDAKQVSDSRMQKQRAKVLAKRSRANLEKLFESMGADEIKELKLIIKADVHGSLEALNDSIMKLAQDEVDITIVHSGTGAINESDVSLAAVSDAIIIGFNVRPTPKVRSMAKDENVDMRFYDIIYNVINDIKAAITGLMPSTFHEVIIGRAEVRDTFVIPHKGLTIGGSFVLEGKIARGFKVRLLRDGVVKCDSTLSSLRRFKDDVKEVAHGYECGIGIERYNDIKIGDIFECYEIEERKAQVEQIKE.

Residues Ser33–Lys425 form a disordered region. 4 stretches are compositionally biased toward basic and acidic residues: residues Glu43–Val62, Thr135–Pro148, Thr167–Ser198, and Ser223–Arg263. The span at Glu316–Gln325 shows a compositional bias: polar residues. Residues Lys332 to Arg350 show a composition bias toward basic and acidic residues. Basic residues predominate over residues Arg365–Gly375. A compositionally biased stretch (basic and acidic residues) spans Ser394–Arg406. Over residues Ser407–Thr423 the composition is skewed to basic residues. The 170-residue stretch at Ser518–Lys687 folds into the tr-type G domain. A G1 region spans residues Gly527–Thr534. Residue Gly527–Thr534 coordinates GTP. The G2 stretch occupies residues Gly552–His556. A G3 region spans residues Asp573–Gly576. Residues Asp573–His577 and Asn627–Asp630 contribute to the GTP site. Positions Asn627–Asp630 are G4. The segment at Ser663–Lys665 is G5.

It belongs to the TRAFAC class translation factor GTPase superfamily. Classic translation factor GTPase family. IF-2 subfamily.

It is found in the cytoplasm. One of the essential components for the initiation of protein synthesis. Protects formylmethionyl-tRNA from spontaneous hydrolysis and promotes its binding to the 30S ribosomal subunits. Also involved in the hydrolysis of GTP during the formation of the 70S ribosomal complex. This chain is Translation initiation factor IF-2, found in Desulforapulum autotrophicum (strain ATCC 43914 / DSM 3382 / VKM B-1955 / HRM2) (Desulfobacterium autotrophicum).